The primary structure comprises 705 residues: tRNA 5-methylaminomethyl-2-thiouridine biosynthesis bifunctional protein MnmC (705 aa).

Residues Met-1 to Ala-241 are tRNA (mnm(5)s(2)U34)-methyltransferase. Residues Ile-289 to Val-705 are FAD-dependent cmnm(5)s(2)U34 oxidoreductase.

This sequence in the N-terminal section; belongs to the methyltransferase superfamily. tRNA (mnm(5)s(2)U34)-methyltransferase family. In the C-terminal section; belongs to the DAO family. The cofactor is FAD.

Its subcellular location is the cytoplasm. It catalyses the reaction 5-aminomethyl-2-thiouridine(34) in tRNA + S-adenosyl-L-methionine = 5-methylaminomethyl-2-thiouridine(34) in tRNA + S-adenosyl-L-homocysteine + H(+). Its function is as follows. Catalyzes the last two steps in the biosynthesis of 5-methylaminomethyl-2-thiouridine (mnm(5)s(2)U) at the wobble position (U34) in tRNA. Catalyzes the FAD-dependent demodification of cmnm(5)s(2)U34 to nm(5)s(2)U34, followed by the transfer of a methyl group from S-adenosyl-L-methionine to nm(5)s(2)U34, to form mnm(5)s(2)U34. This is tRNA 5-methylaminomethyl-2-thiouridine biosynthesis bifunctional protein MnmC from Pseudoalteromonas atlantica (strain T6c / ATCC BAA-1087).